Reading from the N-terminus, the 444-residue chain is Trigger factor (444 aa).

One can recognise a PPIase FKBP-type domain in the interval 163 to 248 (GDFLTVDFVG…AKALKKAVAP (86 aa)).

It belongs to the FKBP-type PPIase family. Tig subfamily.

The protein localises to the cytoplasm. The catalysed reaction is [protein]-peptidylproline (omega=180) = [protein]-peptidylproline (omega=0). In terms of biological role, involved in protein export. Acts as a chaperone by maintaining the newly synthesized protein in an open conformation. Functions as a peptidyl-prolyl cis-trans isomerase. This is Trigger factor from Granulibacter bethesdensis (strain ATCC BAA-1260 / CGDNIH1).